Consider the following 485-residue polypeptide: Cysteine--tRNA ligase (485 aa).

Cysteine 27 serves as a coordination point for Zn(2+). A 'HIGH' region motif is present at residues 29 to 39 (ITAYDFSHIGH). Zn(2+)-binding residues include cysteine 208, histidine 233, and glutamate 237. The short motif at 265–269 (KMSKS) is the 'KMSKS' region element. ATP is bound at residue lysine 268.

The protein belongs to the class-I aminoacyl-tRNA synthetase family. As to quaternary structure, monomer. Zn(2+) serves as cofactor.

Its subcellular location is the cytoplasm. The catalysed reaction is tRNA(Cys) + L-cysteine + ATP = L-cysteinyl-tRNA(Cys) + AMP + diphosphate. This chain is Cysteine--tRNA ligase, found in Lawsonia intracellularis (strain PHE/MN1-00).